The chain runs to 116 residues: Large ribosomal subunit protein bL20 (116 aa).

Belongs to the bacterial ribosomal protein bL20 family.

Its function is as follows. Binds directly to 23S ribosomal RNA and is necessary for the in vitro assembly process of the 50S ribosomal subunit. It is not involved in the protein synthesizing functions of that subunit. This chain is Large ribosomal subunit protein bL20, found in Desulfatibacillum aliphaticivorans.